A 256-amino-acid chain; its full sequence is Imidazole glycerol phosphate synthase subunit HisF (256 aa).

Catalysis depends on residues Asp-11 and Asp-130.

Belongs to the HisA/HisF family. In terms of assembly, heterodimer of HisH and HisF.

It localises to the cytoplasm. The catalysed reaction is 5-[(5-phospho-1-deoxy-D-ribulos-1-ylimino)methylamino]-1-(5-phospho-beta-D-ribosyl)imidazole-4-carboxamide + L-glutamine = D-erythro-1-(imidazol-4-yl)glycerol 3-phosphate + 5-amino-1-(5-phospho-beta-D-ribosyl)imidazole-4-carboxamide + L-glutamate + H(+). Its pathway is amino-acid biosynthesis; L-histidine biosynthesis; L-histidine from 5-phospho-alpha-D-ribose 1-diphosphate: step 5/9. Functionally, IGPS catalyzes the conversion of PRFAR and glutamine to IGP, AICAR and glutamate. The HisF subunit catalyzes the cyclization activity that produces IGP and AICAR from PRFAR using the ammonia provided by the HisH subunit. This Prochlorococcus marinus (strain MIT 9312) protein is Imidazole glycerol phosphate synthase subunit HisF.